Consider the following 132-residue polypeptide: VEAFLGSWKLQKSHNFDEYMKNLDVSLAQRKVATTVKPKTIISLDGDVITIKTESTFKSTNIQFKLAEEFDETTADNRTTKTTVKLENGKLVQTQRWDGKETTLVRELQDGKLILTCTMGDVVCTREYVREQ.

Valine 1 carries the N-acetylvaline modification. At tyrosine 19 the chain carries Phosphotyrosine; by Tyr-kinases.

This sequence belongs to the calycin superfamily. Fatty-acid binding protein (FABP) family.

The protein localises to the cytoplasm. In terms of biological role, FABPs are thought to play a role in the intracellular transport of long-chain fatty acids and their acyl-CoA esters. The protein is Fatty acid-binding protein, liver of Ginglymostoma cirratum (Nurse shark).